The chain runs to 257 residues: Adenosylcobinamide-GDP ribazoletransferase (257 aa).

4 helical membrane passes run 28-48 (FARS…LVAL), 50-70 (LFVP…VYAV), 110-130 (VALA…VEVA), and 199-219 (WPQV…AALV).

The protein belongs to the CobS family. Requires Mg(2+) as cofactor.

It localises to the cell membrane. The catalysed reaction is alpha-ribazole + adenosylcob(III)inamide-GDP = adenosylcob(III)alamin + GMP + H(+). It carries out the reaction alpha-ribazole 5'-phosphate + adenosylcob(III)inamide-GDP = adenosylcob(III)alamin 5'-phosphate + GMP + H(+). It participates in cofactor biosynthesis; adenosylcobalamin biosynthesis; adenosylcobalamin from cob(II)yrinate a,c-diamide: step 7/7. In terms of biological role, joins adenosylcobinamide-GDP and alpha-ribazole to generate adenosylcobalamin (Ado-cobalamin). Also synthesizes adenosylcobalamin 5'-phosphate from adenosylcobinamide-GDP and alpha-ribazole 5'-phosphate. In Halorubrum lacusprofundi (strain ATCC 49239 / DSM 5036 / JCM 8891 / ACAM 34), this protein is Adenosylcobinamide-GDP ribazoletransferase.